The primary structure comprises 194 residues: MSKIKLIVGLANPGADYAQTRHNAGAWYVDLLAQRHQQSLKEESKFFGYTARINLNGNDVRLLVPTTFMNLSGKAVLAMANFYRIQPDEILVAHDELDLPPGVVKMKLGGGNGGHNGLKDIQSKFSNNPNFYRLRIGIGHPGDKNKVVGFVLGKPPTSEQKLIDDAIDEALACTDILMRDGYEKAINRLHSFKA.

Tyr17 serves as a coordination point for tRNA. Catalysis depends on His22, which acts as the Proton acceptor. TRNA is bound by residues Phe68, Asn70, and Asn116.

It belongs to the PTH family. In terms of assembly, monomer.

The protein localises to the cytoplasm. It catalyses the reaction an N-acyl-L-alpha-aminoacyl-tRNA + H2O = an N-acyl-L-amino acid + a tRNA + H(+). Functionally, hydrolyzes ribosome-free peptidyl-tRNAs (with 1 or more amino acids incorporated), which drop off the ribosome during protein synthesis, or as a result of ribosome stalling. In terms of biological role, catalyzes the release of premature peptidyl moieties from peptidyl-tRNA molecules trapped in stalled 50S ribosomal subunits, and thus maintains levels of free tRNAs and 50S ribosomes. The sequence is that of Peptidyl-tRNA hydrolase from Proteus mirabilis (strain HI4320).